The chain runs to 166 residues: Small ribosomal subunit protein uS5 (166 aa).

The region spanning 12–75 is the S5 DRBM domain; the sequence is YIEKLVQVNR…EAARRNMIQV (64 aa).

This sequence belongs to the universal ribosomal protein uS5 family. As to quaternary structure, part of the 30S ribosomal subunit. Contacts proteins S4 and S8.

With S4 and S12 plays an important role in translational accuracy. In terms of biological role, located at the back of the 30S subunit body where it stabilizes the conformation of the head with respect to the body. This chain is Small ribosomal subunit protein uS5, found in Pseudomonas aeruginosa (strain LESB58).